A 594-amino-acid polypeptide reads, in one-letter code: Arrestin domain-containing protein C584.15c (594 aa).

The span at 368-398 (NPQLQSGFTTPNLSRRNSSDFGPNSPVNIHS) shows a compositional bias: polar residues. Disordered regions lie at residues 368-417 (NPQL…NSNA) and 531-594 (EATR…RGVR). Over residues 404 to 417 (SGQQPSSPASNSNA) the composition is skewed to low complexity. Residues 534 to 552 (RPSSPTESVEIPSNTTTIA) are compositionally biased toward polar residues. A compositionally biased stretch (pro residues) spans 565–574 (PSTPAPPLPS). A Phosphoserine modification is found at Ser-584.

Belongs to the arrestin family.

This Schizosaccharomyces pombe (strain 972 / ATCC 24843) (Fission yeast) protein is Arrestin domain-containing protein C584.15c.